Here is a 477-residue protein sequence, read N- to C-terminus: Ribulose bisphosphate carboxylase large chain (477 aa).

Residues 1–2 (MS) constitute a propeptide that is removed on maturation. Pro3 is modified (N-acetylproline). 2 residues coordinate substrate: Asn123 and Thr173. Lys175 functions as the Proton acceptor in the catalytic mechanism. Position 177 (Lys177) interacts with substrate. The Mg(2+) site is built by Lys201, Asp203, and Glu204. N6-carboxylysine is present on Lys201. The Proton acceptor role is filled by His294. The substrate site is built by Arg295, His327, and Ser379.

The protein belongs to the RuBisCO large chain family. Type I subfamily. In terms of assembly, heterohexadecamer of 8 large chains and 8 small chains; disulfide-linked. The disulfide link is formed within the large subunit homodimers. Requires Mg(2+) as cofactor. In terms of processing, the disulfide bond which can form in the large chain dimeric partners within the hexadecamer appears to be associated with oxidative stress and protein turnover.

Its subcellular location is the plastid. The protein localises to the chloroplast. The catalysed reaction is 2 (2R)-3-phosphoglycerate + 2 H(+) = D-ribulose 1,5-bisphosphate + CO2 + H2O. It catalyses the reaction D-ribulose 1,5-bisphosphate + O2 = 2-phosphoglycolate + (2R)-3-phosphoglycerate + 2 H(+). Functionally, ruBisCO catalyzes two reactions: the carboxylation of D-ribulose 1,5-bisphosphate, the primary event in carbon dioxide fixation, as well as the oxidative fragmentation of the pentose substrate in the photorespiration process. Both reactions occur simultaneously and in competition at the same active site. The chain is Ribulose bisphosphate carboxylase large chain from Avena sativa (Oat).